Reading from the N-terminus, the 207-residue chain is 3-isopropylmalate dehydratase small subunit (207 aa).

It belongs to the LeuD family. LeuD type 1 subfamily. In terms of assembly, heterodimer of LeuC and LeuD.

The catalysed reaction is (2R,3S)-3-isopropylmalate = (2S)-2-isopropylmalate. It participates in amino-acid biosynthesis; L-leucine biosynthesis; L-leucine from 3-methyl-2-oxobutanoate: step 2/4. Functionally, catalyzes the isomerization between 2-isopropylmalate and 3-isopropylmalate, via the formation of 2-isopropylmaleate. In Gluconacetobacter diazotrophicus (strain ATCC 49037 / DSM 5601 / CCUG 37298 / CIP 103539 / LMG 7603 / PAl5), this protein is 3-isopropylmalate dehydratase small subunit.